The chain runs to 298 residues: DegV domain-containing protein UU535 (298 aa).

Residues 5-287 form the DegV domain; the sequence is FLIMTDSSTT…KGALGIQVIA (283 aa). Positions 65 and 96 each coordinate hexadecanoate.

Its function is as follows. May bind long-chain fatty acids, such as palmitate, and may play a role in lipid transport or fatty acid metabolism. The chain is DegV domain-containing protein UU535 from Ureaplasma parvum serovar 3 (strain ATCC 700970).